A 375-amino-acid polypeptide reads, in one-letter code: 23S rRNA (uracil(747)-C(5))-methyltransferase RlmC (375 aa).

The [4Fe-4S] cluster site is built by Cys-3, Cys-11, Cys-14, and Cys-87. S-adenosyl-L-methionine-binding residues include Gln-212, Phe-241, Glu-262, and Asn-307. Cys-334 acts as the Nucleophile in catalysis.

This sequence belongs to the class I-like SAM-binding methyltransferase superfamily. RNA M5U methyltransferase family. RlmC subfamily.

The catalysed reaction is uridine(747) in 23S rRNA + S-adenosyl-L-methionine = 5-methyluridine(747) in 23S rRNA + S-adenosyl-L-homocysteine + H(+). In terms of biological role, catalyzes the formation of 5-methyl-uridine at position 747 (m5U747) in 23S rRNA. This is 23S rRNA (uracil(747)-C(5))-methyltransferase RlmC from Escherichia coli O45:K1 (strain S88 / ExPEC).